The chain runs to 158 residues: Ribosomal RNA large subunit methyltransferase H (158 aa).

S-adenosyl-L-methionine contacts are provided by residues L74, G105, and 124 to 129 (LGPLTL).

The protein belongs to the RNA methyltransferase RlmH family. As to quaternary structure, homodimer.

It is found in the cytoplasm. The enzyme catalyses pseudouridine(1915) in 23S rRNA + S-adenosyl-L-methionine = N(3)-methylpseudouridine(1915) in 23S rRNA + S-adenosyl-L-homocysteine + H(+). In terms of biological role, specifically methylates the pseudouridine at position 1915 (m3Psi1915) in 23S rRNA. The sequence is that of Ribosomal RNA large subunit methyltransferase H from Xylella fastidiosa (strain 9a5c).